A 246-amino-acid polypeptide reads, in one-letter code: UDP-N-acetyl-D-mannosaminuronic acid transferase (246 aa).

The protein belongs to the glycosyltransferase 26 family.

The enzyme catalyses UDP-N-acetyl-alpha-D-mannosaminouronate + N-acetyl-alpha-D-glucosaminyl-di-trans,octa-cis-undecaprenyl diphosphate = beta-D-ManNAcA-(1-&gt;4)-alpha-D-GlcNAc-di-trans,octa-cis-undecaprenyl diphosphate + UDP + H(+). It functions in the pathway bacterial outer membrane biogenesis; enterobacterial common antigen biosynthesis. Catalyzes the synthesis of Und-PP-GlcNAc-ManNAcA (Lipid II), the second lipid-linked intermediate involved in enterobacterial common antigen (ECA) synthesis. This Shigella flexneri protein is UDP-N-acetyl-D-mannosaminuronic acid transferase.